The sequence spans 459 residues: Cysteine--tRNA ligase (459 aa).

Cys-29 contacts Zn(2+). The 'HIGH' region signature appears at 31 to 41 (VTTYDYCHIGH). Residues Cys-210, His-235, and Glu-239 each coordinate Zn(2+). The 'KMSKS' region signature appears at 267-271 (KMSKS). An ATP-binding site is contributed by Lys-270.

The protein belongs to the class-I aminoacyl-tRNA synthetase family. As to quaternary structure, monomer. The cofactor is Zn(2+).

It is found in the cytoplasm. The catalysed reaction is tRNA(Cys) + L-cysteine + ATP = L-cysteinyl-tRNA(Cys) + AMP + diphosphate. The chain is Cysteine--tRNA ligase from Idiomarina loihiensis (strain ATCC BAA-735 / DSM 15497 / L2-TR).